A 350-amino-acid polypeptide reads, in one-letter code: Pleckstrin (350 aa).

A PH 1 domain is found at Lys4 to Lys101. Lys64 bears the N6-acetyllysine mark. Residues Ser113 and Ser117 each carry the phosphoserine; by PKC modification. Positions Thr136–Asp221 constitute a DEP domain. The PH 2 domain occupies Val244–Arg347.

In terms of biological role, major protein kinase C substrate of platelets. In Homo sapiens (Human), this protein is Pleckstrin (PLEK).